The chain runs to 128 residues: uncharacterized protein (128 aa).

A disordered region spans residues 25–61 (LPNRLPEGSTVGPKPDSSWEAGSQGNWGLTSSGAGQD). Positions 44 to 61 (EAGSQGNWGLTSSGAGQD) are enriched in polar residues.

This is an uncharacterized protein from Homo sapiens (Human).